Here is a 78-residue protein sequence, read N- to C-terminus: Large ribosomal subunit protein bL28 (78 aa).

The segment at 1-31 (MAAHCQVTGAEPGFGHSISHSHRRNKRRFDP) is disordered.

The protein belongs to the bacterial ribosomal protein bL28 family.

The chain is Large ribosomal subunit protein bL28 from Arthrobacter sp. (strain FB24).